The following is a 169-amino-acid chain: Large ribosomal subunit protein uL15 (169 aa).

The interval glycine 20 to leucine 56 is disordered. The span at arginine 21–valine 35 shows a compositional bias: gly residues.

Belongs to the universal ribosomal protein uL15 family. As to quaternary structure, part of the 50S ribosomal subunit.

Its function is as follows. Binds to the 23S rRNA. This is Large ribosomal subunit protein uL15 from Methylorubrum extorquens (strain CM4 / NCIMB 13688) (Methylobacterium extorquens).